The sequence spans 598 residues: NADH-quinone oxidoreductase subunit C/D (598 aa).

Residues 1–189 are NADH dehydrogenase I subunit C; sequence MTDLTTSDST…DPFVLTKQKE (189 aa). The segment at 213–598 is NADH dehydrogenase I subunit D; the sequence is DFMFLNLGPN…IDFVMSDVDR (386 aa).

It in the N-terminal section; belongs to the complex I 30 kDa subunit family. In the C-terminal section; belongs to the complex I 49 kDa subunit family. In terms of assembly, NDH-1 is composed of 13 different subunits. Subunits NuoB, CD, E, F, and G constitute the peripheral sector of the complex.

It is found in the cell inner membrane. The enzyme catalyses a quinone + NADH + 5 H(+)(in) = a quinol + NAD(+) + 4 H(+)(out). Functionally, NDH-1 shuttles electrons from NADH, via FMN and iron-sulfur (Fe-S) centers, to quinones in the respiratory chain. The immediate electron acceptor for the enzyme in this species is believed to be ubiquinone. Couples the redox reaction to proton translocation (for every two electrons transferred, four hydrogen ions are translocated across the cytoplasmic membrane), and thus conserves the redox energy in a proton gradient. The protein is NADH-quinone oxidoreductase subunit C/D of Yersinia enterocolitica serotype O:8 / biotype 1B (strain NCTC 13174 / 8081).